The chain runs to 392 residues: Succinate--CoA ligase [ADP-forming] subunit beta (392 aa).

In terms of domain architecture, ATP-grasp spans 9–248; the sequence is KDILRKFGVA…ISEEDPFEVE (240 aa). Residues lysine 50, 57–59, glutamate 103, methionine 106, and glutamate 111 each bind ATP; that span reads GRG. The Mg(2+) site is built by asparagine 203 and aspartate 217. Residues asparagine 268 and 325–327 each bind substrate; that span reads GIV.

The protein belongs to the succinate/malate CoA ligase beta subunit family. Heterotetramer of two alpha and two beta subunits. Mg(2+) serves as cofactor.

It catalyses the reaction succinate + ATP + CoA = succinyl-CoA + ADP + phosphate. The enzyme catalyses GTP + succinate + CoA = succinyl-CoA + GDP + phosphate. It functions in the pathway carbohydrate metabolism; tricarboxylic acid cycle; succinate from succinyl-CoA (ligase route): step 1/1. Succinyl-CoA synthetase functions in the citric acid cycle (TCA), coupling the hydrolysis of succinyl-CoA to the synthesis of either ATP or GTP and thus represents the only step of substrate-level phosphorylation in the TCA. The beta subunit provides nucleotide specificity of the enzyme and binds the substrate succinate, while the binding sites for coenzyme A and phosphate are found in the alpha subunit. The chain is Succinate--CoA ligase [ADP-forming] subunit beta from Chlorobium phaeobacteroides (strain DSM 266 / SMG 266 / 2430).